A 178-amino-acid chain; its full sequence is uncharacterized protein (178 aa).

The signal sequence occupies residues 1–19; the sequence is MKKLLIVTMLFTLALSAQA.

This sequence belongs to the opacity porin family.

This is an uncharacterized protein from Haemophilus influenzae (strain ATCC 51907 / DSM 11121 / KW20 / Rd).